Reading from the N-terminus, the 336-residue chain is MTKVAVLGSGSWGTAFANVVADAGIAETVLWGRRPEIVEAINTKHENPDYLPGITLNPRLTATTDVAEAMAGADFTVIAVPAQTLRTNLAAWSEALDPGTVVVSLMKGIEVGTCLRMSEVIAEVLELPDHRIAVLSGPNLAREIAERQPATAVVACTDEQTAVRLQHLCKSPYFRPYTNTDVIGVELGGAVKNVIALAVGVAVGMGFGDNAKAALITRGLAETVRLAVALGADEHTLAGLAGLGDLVATCSSPLSRNRTFGEKLGSGMTVDEVIAETKQTAEGVKSSTSILELARAHGVEMPITEAVVAMMYHGLPPAEALLAFMSRSAKPERYGV.

Residues Ser11, Trp12, Arg33, Arg34, and Lys107 each contribute to the NADPH site. The sn-glycerol 3-phosphate site is built by Lys107 and Gly137. Ala141 is an NADPH binding site. Residues Lys192, Asp245, Ser255, Arg256, and Asn257 each coordinate sn-glycerol 3-phosphate. The active-site Proton acceptor is the Lys192. NADPH is bound at residue Arg256. Position 282 (Glu282) interacts with NADPH.

It belongs to the NAD-dependent glycerol-3-phosphate dehydrogenase family.

It localises to the cytoplasm. The catalysed reaction is sn-glycerol 3-phosphate + NAD(+) = dihydroxyacetone phosphate + NADH + H(+). It catalyses the reaction sn-glycerol 3-phosphate + NADP(+) = dihydroxyacetone phosphate + NADPH + H(+). Its pathway is membrane lipid metabolism; glycerophospholipid metabolism. Its function is as follows. Catalyzes the reduction of the glycolytic intermediate dihydroxyacetone phosphate (DHAP) to sn-glycerol 3-phosphate (G3P), the key precursor for phospholipid synthesis. The chain is Glycerol-3-phosphate dehydrogenase [NAD(P)+] from Thermobifida fusca (strain YX).